A 347-amino-acid chain; its full sequence is Phosphoribosylformylglycinamidine cyclo-ligase (347 aa).

This sequence belongs to the AIR synthase family.

The protein localises to the cytoplasm. It carries out the reaction 2-formamido-N(1)-(5-O-phospho-beta-D-ribosyl)acetamidine + ATP = 5-amino-1-(5-phospho-beta-D-ribosyl)imidazole + ADP + phosphate + H(+). Its pathway is purine metabolism; IMP biosynthesis via de novo pathway; 5-amino-1-(5-phospho-D-ribosyl)imidazole from N(2)-formyl-N(1)-(5-phospho-D-ribosyl)glycinamide: step 2/2. The protein is Phosphoribosylformylglycinamidine cyclo-ligase of Alkalilimnicola ehrlichii (strain ATCC BAA-1101 / DSM 17681 / MLHE-1).